Here is a 177-residue protein sequence, read N- to C-terminus: Large ribosomal subunit protein uL6 (177 aa).

This sequence belongs to the universal ribosomal protein uL6 family. Part of the 50S ribosomal subunit.

Its function is as follows. This protein binds to the 23S rRNA, and is important in its secondary structure. It is located near the subunit interface in the base of the L7/L12 stalk, and near the tRNA binding site of the peptidyltransferase center. This chain is Large ribosomal subunit protein uL6, found in Bartonella quintana (strain Toulouse) (Rochalimaea quintana).